We begin with the raw amino-acid sequence, 259 residues long: 2,3-dihydroxy-2,3-dihydro-p-cumate dehydrogenase (259 aa).

An NAD(+)-binding site is contributed by 18 to 42 (VTGGAHGIGLGIVERLLGLGARVTA). The active-site Proton acceptor is Y163.

The protein belongs to the short-chain dehydrogenases/reductases (SDR) family.

The enzyme catalyses (2R,3S)-2,3-dihydroxy-2,3-dihydro-p-cumate + NAD(+) = 2,3-dihydroxy-p-cumate + NADH + H(+). It functions in the pathway aromatic compound metabolism; p-cumate degradation; acetaldehyde and pyruvate from p-cumate: step 2/7. This is 2,3-dihydroxy-2,3-dihydro-p-cumate dehydrogenase (cmtB) from Pseudomonas putida (strain ATCC 700007 / DSM 6899 / JCM 31910 / BCRC 17059 / LMG 24140 / F1).